A 95-amino-acid chain; its full sequence is Ferredoxin-like protein FixX (95 aa).

This sequence belongs to the bacterial-type ferredoxin family. FixX subfamily.

Could be part of an electron transfer system required for anaerobic carnitine reduction. Could be a 3Fe-4S cluster-containing protein. The protein is Ferredoxin-like protein FixX (fixX) of Salmonella typhimurium (strain LT2 / SGSC1412 / ATCC 700720).